The chain runs to 290 residues: MPSLKDLRNRIASVKATQKITKAMQMVAAAKLRRAQEAAEAARPYAERMDAVLANVSASISGADAPPLMAGTGKDDVHLVVVCTADRGLAGSFNSQIARLAREHIRKLQANGRQVKIITVGKKGYDLLRRDFGKLVIDRIELREVKQIGFANADAIAKKVIGLFEAGEFDVCTLIYSRFKSVISQIPTEQQIIPAAVPQAEGESTGAIYEYEPDAGAILADLIPRNIAVQIFRALLENAAGEMGAKMTAMDNATRNAGEMINKLTITYNRQRQAQITKELIEIISGAEAL.

Belongs to the ATPase gamma chain family. F-type ATPases have 2 components, CF(1) - the catalytic core - and CF(0) - the membrane proton channel. CF(1) has five subunits: alpha(3), beta(3), gamma(1), delta(1), epsilon(1). CF(0) has three main subunits: a, b and c.

The protein localises to the cell inner membrane. Its function is as follows. Produces ATP from ADP in the presence of a proton gradient across the membrane. The gamma chain is believed to be important in regulating ATPase activity and the flow of protons through the CF(0) complex. In Chelativorans sp. (strain BNC1), this protein is ATP synthase gamma chain.